Reading from the N-terminus, the 92-residue chain is Small ribosomal subunit protein uS19c (92 aa).

This sequence belongs to the universal ribosomal protein uS19 family.

The protein resides in the plastid. Its subcellular location is the chloroplast. In terms of biological role, protein S19 forms a complex with S13 that binds strongly to the 16S ribosomal RNA. This Trieres chinensis (Marine centric diatom) protein is Small ribosomal subunit protein uS19c (rps19).